We begin with the raw amino-acid sequence, 325 residues long: Hydroxymethylglutaryl-CoA lyase, mitochondrial (325 aa).

The transit peptide at 1–27 (MAAMTKALPRRLVGLASLRAVSTSSMD) directs the protein to the mitochondrion. The 268-residue stretch at 33–300 (VKIVEVGPRD…HTGVNLQKLL (268 aa)) folds into the Pyruvate carboxyltransferase domain. Position 41 (Arg-41) interacts with substrate. Asp-42 lines the a divalent metal cation pocket. An N6-acetyllysine; alternate modification is found at Lys-48. At Lys-48 the chain carries N6-succinyllysine; alternate. Lys-111 is modified (N6-acetyllysine). Residues Lys-137 and Lys-179 each carry the N6-acetyllysine; alternate modification. 2 positions are modified to N6-succinyllysine; alternate: Lys-137 and Lys-179. Residues His-233 and His-235 each contribute to the a divalent metal cation site. Cys-266 is an active-site residue. Asn-275 contributes to the a divalent metal cation binding site. The Microbody targeting signal signature appears at 323 to 325 (CKL). The residue at position 324 (Lys-324) is an N6-acetyllysine.

The protein belongs to the HMG-CoA lyase family. Homodimer; disulfide-linked. Can also form homotetramers.

The protein localises to the mitochondrion matrix. The protein resides in the peroxisome. It catalyses the reaction (3S)-3-hydroxy-3-methylglutaryl-CoA = acetoacetate + acetyl-CoA. It participates in metabolic intermediate metabolism; (S)-3-hydroxy-3-methylglutaryl-CoA degradation; acetoacetate from (S)-3-hydroxy-3-methylglutaryl-CoA: step 1/1. Functionally, mitochondrial 3-hydroxy-3-methylglutaryl-CoA lyase that catalyzes a cation-dependent cleavage of (S)-3-hydroxy-3-methylglutaryl-CoA into acetyl-CoA and acetoacetate, a key step in ketogenesis. Terminal step in leucine catabolism. Ketone bodies (beta-hydroxybutyrate, acetoacetate and acetone) are essential as an alternative source of energy to glucose, as lipid precursors and as regulators of metabolism. This Macaca fascicularis (Crab-eating macaque) protein is Hydroxymethylglutaryl-CoA lyase, mitochondrial (HMGCL).